The primary structure comprises 1260 residues: Kinesin-like protein KIN-14E (1260 aa).

Residues 115–274 (FQKDPIPTSL…PGREEIEALL (160 aa)) form the MyTH4 domain. Residues 279 to 593 (LTTIVFFLDE…HINDVMLRRY (315 aa)) enclose the FERM domain. 2 coiled-coil regions span residues 615-676 (QNFE…LLEV) and 753-853 (SKRL…TAAI). Residues 888–1209 (KIRVYCRIRP…LLYASRVRTI (322 aa)) enclose the Kinesin motor domain. Residue 972 to 977 (GSGKTF) coordinates ATP. Residues 1217–1239 (ISSKEMVRLKKLVAYWKEQAGKK) form a calmodulin-binding region. Residues 1221-1260 (EMVRLKKLVAYWKEQAGKKGEEEDLVDIEEDRTRKDEADS) are homodimerization domain. The interval 1236 to 1260 (AGKKGEEEDLVDIEEDRTRKDEADS) is disordered. Residues 1251-1260 (DRTRKDEADS) show a composition bias toward basic and acidic residues.

The protein belongs to the TRAFAC class myosin-kinesin ATPase superfamily. Kinesin family. KIN-14 subfamily. Homodimer (via C-terminus). Binds microtubules via its N-terminus containing the MyTH4 domain and binds F-actin via its FERM domain. Interacts with KIPK1. Interacts with KIPK2. Interacts with AN. Interacts with AIR9. Interacts (via C-terminus) with KIC, CAM2, CAM4 and CAM6. KIC and calmodulin show competitive binding to KCBP. Binding to calmodulin inhibits microtubule binding activity. Binding to KIC inhibits microtubule binding activity and microtubule-stimulated ATPase activity. As to expression, widely expressed with the highest levels in flowers. Strongly expressed in the root tip. Highly detected in the branch apex of the trichome.

It localises to the cytoplasm. The protein localises to the cell cortex. It is found in the cytoskeleton. Its subcellular location is the spindle. The protein resides in the phragmoplast. Its function is as follows. Minus-end microtubule-dependent motor protein involved in the regulation of cell division and trichome morphogenesis through microtubules bundling. Possesses basal and microtubule-stimulated ATPase activities. Acts as a hub that brings together microtubules and actin filaments to modulate the cytoskeleton during trichome formation and morphogenesis. Could be involved in the negative regulation of root growth. The sequence is that of Kinesin-like protein KIN-14E from Arabidopsis thaliana (Mouse-ear cress).